The sequence spans 322 residues: Breast cancer metastasis-suppressor 1-like protein (322 aa).

Over residues 1–16 (MPVHSREKKESNHNDM) the composition is skewed to basic and acidic residues. A disordered region spans residues 1–56 (MPVHSREKKESNHNDMEVDYPENEGSSSEEDDSDSSSGSEEGDSSEMDDEDCERRR). The span at 17-51 (EVDYPENEGSSSEEDDSDSSSGSEEGDSSEMDDED) shows a compositional bias: acidic residues. 2 coiled-coil regions span residues 50 to 99 (EDCE…QAQE) and 147 to 178 (EKLL…ITSE).

The protein belongs to the BRMS1 family.

It localises to the nucleus. Its function is as follows. Involved in the histone deacetylase (HDAC1)-dependent transcriptional repression activity. The sequence is that of Breast cancer metastasis-suppressor 1-like protein (brms1l) from Xenopus laevis (African clawed frog).